Reading from the N-terminus, the 98-residue chain is Acylphosphatase (98 aa).

In terms of domain architecture, Acylphosphatase-like spans 12–98 (TYYVRVRGVV…DKRFERFQQH (87 aa)). Residues R27 and N45 contribute to the active site.

This sequence belongs to the acylphosphatase family.

The enzyme catalyses an acyl phosphate + H2O = a carboxylate + phosphate + H(+). This is Acylphosphatase (acyP) from Burkholderia thailandensis (strain ATCC 700388 / DSM 13276 / CCUG 48851 / CIP 106301 / E264).